The following is a 242-amino-acid chain: 7-cyano-7-deazaguanine synthase (242 aa).

13-23 (FSGGQDSSVCL) contributes to the ATP binding site. The Zn(2+) site is built by Cys201, Cys216, Cys219, and Cys222.

This sequence belongs to the QueC family. Zn(2+) serves as cofactor.

The enzyme catalyses 7-carboxy-7-deazaguanine + NH4(+) + ATP = 7-cyano-7-deazaguanine + ADP + phosphate + H2O + H(+). It participates in purine metabolism; 7-cyano-7-deazaguanine biosynthesis. In terms of biological role, catalyzes the ATP-dependent conversion of 7-carboxy-7-deazaguanine (CDG) to 7-cyano-7-deazaguanine (preQ(0)). This chain is 7-cyano-7-deazaguanine synthase, found in Caulobacter vibrioides (strain ATCC 19089 / CIP 103742 / CB 15) (Caulobacter crescentus).